The sequence spans 147 residues: Large ribosomal subunit protein uL13 (147 aa).

The protein belongs to the universal ribosomal protein uL13 family. Part of the 50S ribosomal subunit.

Its function is as follows. This protein is one of the early assembly proteins of the 50S ribosomal subunit, although it is not seen to bind rRNA by itself. It is important during the early stages of 50S assembly. The polypeptide is Large ribosomal subunit protein uL13 (Rhodococcus opacus (strain B4)).